A 991-amino-acid polypeptide reads, in one-letter code: Toll-like receptor 13 (991 aa).

The signal sequence occupies residues 1 to 68; sequence MSGLYRILVQ…GFSLPPVAET (68 aa). Over 69–783 the chain is Extracellular; that stretch reads YGFNKCTQYE…DAMCNFDLGK (715 aa). N-linked (GlcNAc...) asparagine glycans are attached at residues Asn-93, Asn-109, and Asn-125. LRR repeat units lie at residues 104-125, 128-149, 152-174, 175-196, 199-220, 225-246, 248-268, 271-292, 295-315, 318-338, 348-368, 372-394, 397-418, 421-442, 445-466, 469-490, 493-514, 517-538, 541-562, 565-585, 594-617, 620-641, 644-665, 672-693, and 696-716; these read YTTH…SFTN, ALVD…AFRG, NLTL…EGLS, SLKT…AFTP, KLKY…LEAV, CLER…PRSL, SLTH…SALS, NLTN…YLKT, QLKS…SAKH, NLRA…DMKT, KLET…KQLA, RLLF…EFNA, SLQK…TWSS, NLTS…AFSP, HLEF…AFSG, ALKE…SFTQ, NLEV…TFRP, KLQS…SFSG, NLRS…LFSG, KLLI…RTLQ, SLKQ…FFQG, SLQE…QFDP, NLTK…LNAS, RLKI…MFSS, and SLQV…SHLK. Asn-152 and Asn-167 each carry an N-linked (GlcNAc...) asparagine glycan. Residues Asn-209, Asn-233, Asn-263, Asn-271, Asn-274, Asn-300, and Asn-310 are each glycosylated (N-linked (GlcNAc...) asparagine). N-linked (GlcNAc...) asparagine glycans are attached at residues Asn-357, Asn-388, Asn-413, and Asn-421. 2 N-linked (GlcNAc...) asparagine glycosylation sites follow: Asn-644 and Asn-663. Residues Asn-711 and Asn-742 are each glycosylated (N-linked (GlcNAc...) asparagine). Residues 729–779 form the LRRCT domain; that stretch reads NKLQCTCDNLWFKNWSMNTEEVHIPFLRSYPCQQPGSQSLLIDFDDAMCNF. Residues 784 to 804 form a helical membrane-spanning segment; that stretch reads VYFLCSFSMVLSTMVFSWFST. Topologically, residues 805–991 are cytoplasmic; the sequence is KMIASLWYGL…KENTHLIVVE (187 aa). The TIR domain maps to 832–975; sequence FLYDAFVSFS…LFWARIRNAL (144 aa).

It belongs to the Toll-like receptor family. As to quaternary structure, binds MYD88 via their respective TIR domains. Interacts with UNC93B1.

It is found in the endosome membrane. Functionally, component of innate and adaptive immunity that recognizes and binds 23S rRNA from bacteria. TLRs (Toll-like receptors) control host immune response against pathogens through recognition of molecular patterns specific to microorganisms. Acts via MYD88 and TRAF6, leading to NF-kappa-B activation, cytokine secretion and the inflammatory response. Specifically binds the 5'-CGGAAAGACC-3' sequence on bacterial 23S rRNA, a sequence also bound by MLS group antibiotics (including erythromycin). May also recognize vesicular stomatitis virus; however, these data require additional evidences. The chain is Toll-like receptor 13 (Tlr13) from Mus musculus (Mouse).